Reading from the N-terminus, the 357-residue chain is DNA integrity scanning protein DisA (357 aa).

The region spanning 8-146 (VKSMINILQL…GNLRYTLKDI (139 aa)) is the DAC domain. ATP-binding positions include Gly-75, Leu-93, and 106–110 (MRHRT).

It belongs to the DisA family. Homooctamer. Mg(2+) is required as a cofactor.

It catalyses the reaction 2 ATP = 3',3'-c-di-AMP + 2 diphosphate. In terms of biological role, participates in a DNA-damage check-point that is active prior to asymmetric division when DNA is damaged. DisA forms globular foci that rapidly scan along the chromosomes during sporulation, searching for lesions. When a lesion is present, DisA pauses at the lesion site. This triggers a cellular response that culminates in a temporary block in sporulation initiation. Its function is as follows. Also has diadenylate cyclase activity, catalyzing the condensation of 2 ATP molecules into cyclic di-AMP (c-di-AMP). c-di-AMP acts as a signaling molecule that couples DNA integrity with progression of sporulation. The rise in c-di-AMP level generated by DisA while scanning the chromosome, operates as a positive signal that advances sporulation; upon encountering a lesion, the DisA focus arrests at the damaged site and halts c-di-AMP synthesis. In Bacillus anthracis (strain CDC 684 / NRRL 3495), this protein is DNA integrity scanning protein DisA.